The primary structure comprises 988 residues: Band 4.1-like protein 2 (988 aa).

A disordered region spans residues 1–190 (MTTEVGSASE…GAAKRETKEV (190 aa)). At T2 the chain carries N-acetylthreonine. At S7 the chain carries Phosphoserine. The span at 22-31 (ASKEKAKEVE) shows a compositional bias: basic and acidic residues. S38, S86, and S116 each carry phosphoserine. 2 stretches are compositionally biased toward basic and acidic residues: residues 110–148 (ILGK…EAKP) and 160–190 (EEVR…TKEV). Residues S201, S379, S395, S492, S543, S555, S561, and S582 each carry the phosphoserine modification. An FERM domain is found at 211–492 (VLAKVTLLDG…EHHTFYRLVS (282 aa)). The segment at 495–651 (QPPKTKFLTL…TPEPRPSEWE (157 aa)) is hydrophilic. The tract at residues 514–594 (TQAQTREAST…KATPLPAEGK (81 aa)) is disordered. The segment covering 555 to 567 (SPPGEGSVPGPGV) has biased composition (low complexity). Phosphotyrosine is present on Y606. Residues S610 and S630 each carry the phosphoserine modification. Disordered stretches follow at residues 639 to 788 (MAST…QAGA) and 804 to 839 (QKLP…VPHL). The segment at 652–837 (KRRVTPLPFQ…DPHRVNGEVP (186 aa)) is spectrin--actin-binding. A compositionally biased stretch (basic and acidic residues) spans 673–686 (VEEKKRAEVGKDES). S698 carries the phosphoserine modification. The span at 704-717 (GETRKVEPVAHKDS) shows a compositional bias: basic and acidic residues. A compositionally biased stretch (low complexity) spans 718–729 (TSLSSESSSSSS). Basic and acidic residues predominate over residues 739–751 (QPHHRVTEGTIRE). T745 is subject to Phosphothreonine. Residues 752 to 764 (EQEECDEELEEEP) show a composition bias toward acidic residues. Over residues 828–839 (DPHRVNGEVPHL) the composition is skewed to basic and acidic residues. Residues 838-988 (HLDLDGLPEI…ETELAEEGEE (151 aa)) form a C-terminal (CTD) region.

Interacts with FCGR1A. Interacts with TRPC4. Interacts (via CTD domain) with FKBP2. Interacts with NUMA1; this interaction is negatively regulated by CDK1 during metaphase and promotes anaphase-specific localization of NUMA1 in symmetrically dividing cells. In terms of tissue distribution, widely expressed.

The protein localises to the cytoplasm. The protein resides in the cytoskeleton. It is found in the cell cortex. It localises to the cell membrane. Its function is as follows. Required for dynein-dynactin complex and NUMA1 recruitment at the mitotic cell cortex during anaphase. This chain is Band 4.1-like protein 2, found in Mus musculus (Mouse).